The primary structure comprises 277 residues: MADPWQECMDYAVILARQAGEMIREALKNEMDVMIKSSPADLVTVTDQKVEKMLMSSIKEKYPCHSFIGEESVAAGEKTVFTESPTWFIDPIDGTTNFVHRFPFVAVSIGFLVNKEMEFGIVYSCVEDKMYTGRKGKGAFCNGQKLQVSQQEDITKSLLVTELGSSRKPETLRIVLSNMEKLCSIPIHGIRSVGTAAVNMCLVATGGADAYYEMGIHCWDMAGAGIIVTEAGGVLMDVTGGPFDLMSRRIIAANSITLAKRIAKEIEIIPLQRDDES.

Residues glutamate 70, aspartate 90, isoleucine 92, and aspartate 93 each contribute to the Mg(2+) site. Substrate-binding positions include glutamate 70, 90-95, 194-196, glutamate 213, and aspartate 220; these read DPIDGT and GTA. Residue aspartate 220 coordinates Mg(2+).

It belongs to the inositol monophosphatase superfamily. Homodimer. It depends on Mg(2+) as a cofactor. Mostly expressed in brain, small intestine, testis, kidney, and spleen (at protein level).

It is found in the cytoplasm. The enzyme catalyses a myo-inositol phosphate + H2O = myo-inositol + phosphate. The catalysed reaction is 1D-myo-inositol 1-phosphate + H2O = myo-inositol + phosphate. It carries out the reaction 1D-myo-inositol 2-phosphate + H2O = myo-inositol + phosphate. It catalyses the reaction 1D-myo-inositol 3-phosphate + H2O = myo-inositol + phosphate. The enzyme catalyses 1D-myo-inositol 4-phosphate + H2O = myo-inositol + phosphate. The catalysed reaction is 1D-myo-inositol 5-phosphate + H2O = myo-inositol + phosphate. It carries out the reaction 1D-myo-inositol 6-phosphate + H2O = myo-inositol + phosphate. It catalyses the reaction scyllo-inositol 1-phosphate + H2O = scyllo-inositol + phosphate. The enzyme catalyses alpha-D-galactose 1-phosphate + H2O = D-galactose + phosphate. The catalysed reaction is alpha-D-glucose 1-phosphate + H2O = D-glucose + phosphate. It carries out the reaction D-glucose 6-phosphate + H2O = D-glucose + phosphate. It catalyses the reaction beta-D-fructose 1-phosphate + H2O = D-fructose + phosphate. The enzyme catalyses glycerol 2-phosphate + H2O = glycerol + phosphate. The catalysed reaction is adenosine 2'-phosphate + H2O = adenosine + phosphate. It functions in the pathway polyol metabolism; myo-inositol biosynthesis; myo-inositol from D-glucose 6-phosphate: step 2/2. Its activity is regulated as follows. Inhibited by Li(+), Ca(2+) and Mn(2+), but also by Mg(2+) at concentrations above 3 mM. Phosphatase involved in the dephosphorylation of myo-inositol monophosphate to generate myo-inositol. Is also able to dephosphorylate scyllo-inositol-phosphate, myo-inositol 1,4-diphosphate, scyllo-inositol-1,3-diphosphate and scyllo-inositol-1,4-diphosphate. Also dephosphorylates in vitro other sugar-phosphates including D-galactose-1-phosphate, glucose-1-phosphate, glucose-6-phosphate, fructose-1-phosphate, beta-glycerophosphate and 2'-AMP. Responsible for the provision of inositol required for synthesis of phosphatidylinositol and polyphosphoinositides, and involved in maintaining normal brain function. Has been implicated as the pharmacological target for lithium Li(+) action in brain. The sequence is that of Inositol monophosphatase 1 (Impa1) from Mus musculus (Mouse).